Reading from the N-terminus, the 226-residue chain is UPF0111 protein HI_1603 (226 aa).

It belongs to the UPF0111 family.

This Haemophilus influenzae (strain ATCC 51907 / DSM 11121 / KW20 / Rd) protein is UPF0111 protein HI_1603.